The sequence spans 239 residues: Large ribosomal subunit protein uL2 (239 aa).

A disordered region spans residues 203-239 (PFGGKEHHPGKPTTTSRRAPPGRKVGHIAARRTGRRK). Positions 222 to 239 (PPGRKVGHIAARRTGRRK) are enriched in basic residues.

This sequence belongs to the universal ribosomal protein uL2 family. Part of the 50S ribosomal subunit. Forms a bridge to the 30S subunit in the 70S ribosome.

One of the primary rRNA binding proteins. Required for association of the 30S and 50S subunits to form the 70S ribosome, for tRNA binding and peptide bond formation. It has been suggested to have peptidyltransferase activity; this is somewhat controversial. Makes several contacts with the 16S rRNA in the 70S ribosome. The protein is Large ribosomal subunit protein uL2 of Pyrococcus abyssi (strain GE5 / Orsay).